A 105-amino-acid chain; its full sequence is Large ribosomal subunit protein uL24 (105 aa).

The protein belongs to the universal ribosomal protein uL24 family. Part of the 50S ribosomal subunit.

Its function is as follows. One of two assembly initiator proteins, it binds directly to the 5'-end of the 23S rRNA, where it nucleates assembly of the 50S subunit. One of the proteins that surrounds the polypeptide exit tunnel on the outside of the subunit. The polypeptide is Large ribosomal subunit protein uL24 (Sphingopyxis alaskensis (strain DSM 13593 / LMG 18877 / RB2256) (Sphingomonas alaskensis)).